Reading from the N-terminus, the 482-residue chain is Aspartyl/glutamyl-tRNA(Asn/Gln) amidotransferase subunit B (482 aa).

The protein belongs to the GatB/GatE family. GatB subfamily. Heterotrimer of A, B and C subunits.

The enzyme catalyses L-glutamyl-tRNA(Gln) + L-glutamine + ATP + H2O = L-glutaminyl-tRNA(Gln) + L-glutamate + ADP + phosphate + H(+). The catalysed reaction is L-aspartyl-tRNA(Asn) + L-glutamine + ATP + H2O = L-asparaginyl-tRNA(Asn) + L-glutamate + ADP + phosphate + 2 H(+). Its function is as follows. Allows the formation of correctly charged Asn-tRNA(Asn) or Gln-tRNA(Gln) through the transamidation of misacylated Asp-tRNA(Asn) or Glu-tRNA(Gln) in organisms which lack either or both of asparaginyl-tRNA or glutaminyl-tRNA synthetases. The reaction takes place in the presence of glutamine and ATP through an activated phospho-Asp-tRNA(Asn) or phospho-Glu-tRNA(Gln). This is Aspartyl/glutamyl-tRNA(Asn/Gln) amidotransferase subunit B from Thermotoga neapolitana (strain ATCC 49049 / DSM 4359 / NBRC 107923 / NS-E).